We begin with the raw amino-acid sequence, 430 residues long: Mothers against decapentaplegic homolog 9 (430 aa).

The MH1 domain maps to 16 to 140; sequence PAVKRLLGWK…YRRVETPVLP (125 aa). Positions 68, 113, 125, and 130 each coordinate Zn(2+). The disordered stretch occupies residues 186–222; sequence CPAPPSSPGHVFPQSPCPTSYPHSPGSPSESDSPYQH. Residues 202–221 show a composition bias toward polar residues; it reads CPTSYPHSPGSPSESDSPYQ. Residues 236–430 form the MH2 domain; the sequence is WCSVAYYELN…SPHNPISSVS (195 aa).

The protein belongs to the dwarfin/SMAD family. In terms of assembly, interaction with the co-SMAD SMAD4. Interacts with PEBP2-alpha subunit. Interacts with RANBP3L. Phosphorylated on serine by BMP (bone morphogenetic proteins) type 1 receptor kinase and activin type I receptor-like kinases (ALK-2, ALK-3 and ALK-6).

Its subcellular location is the cytoplasm. The protein localises to the nucleus. Transcriptional modulator activated by BMP (bone morphogenetic proteins) type 1 receptor kinase. SMAD9 is a receptor-regulated SMAD (R-SMAD). Has been shown to be activated by activin type I receptor-like kinases (ALK-2, ALK-3, ALK-6) which stimulate heteromerization between SMAD9 and SMAD4. May play a role in osteoblast differentiation and maturation. The sequence is that of Mothers against decapentaplegic homolog 9 (Smad9) from Mus musculus (Mouse).